A 379-amino-acid chain; its full sequence is UDP-4-amino-4-deoxy-L-arabinose--oxoglutarate aminotransferase (379 aa).

Position 182 is an N6-(pyridoxal phosphate)lysine (Lys182).

The protein belongs to the DegT/DnrJ/EryC1 family. ArnB subfamily. Homodimer. It depends on pyridoxal 5'-phosphate as a cofactor.

It carries out the reaction UDP-4-amino-4-deoxy-beta-L-arabinose + 2-oxoglutarate = UDP-beta-L-threo-pentopyranos-4-ulose + L-glutamate. The protein operates within nucleotide-sugar biosynthesis; UDP-4-deoxy-4-formamido-beta-L-arabinose biosynthesis; UDP-4-deoxy-4-formamido-beta-L-arabinose from UDP-alpha-D-glucuronate: step 2/3. It participates in bacterial outer membrane biogenesis; lipopolysaccharide biosynthesis. In terms of biological role, catalyzes the conversion of UDP-4-keto-arabinose (UDP-Ara4O) to UDP-4-amino-4-deoxy-L-arabinose (UDP-L-Ara4N). The modified arabinose is attached to lipid A and is required for resistance to polymyxin and cationic antimicrobial peptides. This is UDP-4-amino-4-deoxy-L-arabinose--oxoglutarate aminotransferase from Escherichia coli O7:K1 (strain IAI39 / ExPEC).